Reading from the N-terminus, the 286-residue chain is Formamidopyrimidine-DNA glycosylase (286 aa).

The Schiff-base intermediate with DNA role is filled by proline 2. Catalysis depends on glutamate 3, which acts as the Proton donor. Catalysis depends on lysine 61, which acts as the Proton donor; for beta-elimination activity. 3 residues coordinate DNA: histidine 96, arginine 117, and lysine 160. The segment at 246–280 adopts an FPG-type zinc-finger fold; that stretch reads DAYGREGLPCRRCATPMRRRPWMNRSSYFCPKCQR. Arginine 270 acts as the Proton donor; for delta-elimination activity in catalysis.

The protein belongs to the FPG family. As to quaternary structure, monomer. Requires Zn(2+) as cofactor.

The enzyme catalyses Hydrolysis of DNA containing ring-opened 7-methylguanine residues, releasing 2,6-diamino-4-hydroxy-5-(N-methyl)formamidopyrimidine.. It catalyses the reaction 2'-deoxyribonucleotide-(2'-deoxyribose 5'-phosphate)-2'-deoxyribonucleotide-DNA = a 3'-end 2'-deoxyribonucleotide-(2,3-dehydro-2,3-deoxyribose 5'-phosphate)-DNA + a 5'-end 5'-phospho-2'-deoxyribonucleoside-DNA + H(+). Involved in base excision repair of DNA damaged by oxidation or by mutagenic agents. Acts as a DNA glycosylase that recognizes and removes damaged bases. Has a preference for oxidized purines, such as 7,8-dihydro-8-oxoguanine (8-oxoG). Has AP (apurinic/apyrimidinic) lyase activity and introduces nicks in the DNA strand. Cleaves the DNA backbone by beta-delta elimination to generate a single-strand break at the site of the removed base with both 3'- and 5'-phosphates. The sequence is that of Formamidopyrimidine-DNA glycosylase from Streptomyces avermitilis (strain ATCC 31267 / DSM 46492 / JCM 5070 / NBRC 14893 / NCIMB 12804 / NRRL 8165 / MA-4680).